The following is a 186-amino-acid chain: MTSPFKVVAVSGGTYRPSRTLVLTQALIAELGQSLPIDSRVIELTDIAAPLGATLARNQAPAELQAVLDEIESADLLLVASPVYRGSYPGLLKHLFDLIDLNALIDTPVLLAATGGTERHALVLDHQLRPLFSFFQAITLPIGVYASEADFDNYRIVSEPLKARIRLAAERAAPLFGGRSELLKIA.

The protein belongs to the SsuE family.

It carries out the reaction FMNH2 + NADP(+) = FMN + NADPH + 2 H(+). The sequence is that of FMN reductase (NADPH) (msuE) from Pseudomonas aeruginosa (strain ATCC 15692 / DSM 22644 / CIP 104116 / JCM 14847 / LMG 12228 / 1C / PRS 101 / PAO1).